A 765-amino-acid polypeptide reads, in one-letter code: MGSNRCPRLGLVPLILGLLSGGVSMTPLPEARPQSPCSLEGIEIKGGTFHLLKEGLVLEYVCPSGFYPYPVQIRTCRSSGSWSTLQTQDRKIVKRAECKAIRCPRPQDFENGEYWPRAAYYNLSDEISFHCYDGYTLRGSANRTCQVTGRWDGQTAICDDGAGYCPNPGIPIGTRKVGTQYRLEDSVTYYCSRGLTLRGSQRRTCQEGGSWSGTEPSCQDSFMYDTPAEVAEAFLSSLTETIEGVDAEDGHIPGDQQKRKIVLDPSGSMNIYLVLDGSDSIGARNFTGAKNCLKDFIEKVASYGVKPKYGLVTYATDPKVLIRVSNPKSADADWVTEQLDKISYDDHKLKAGTNTKKALLEVYNMMSWGVNNFPDNWNRTRHVIVLLTDGLHNMGGDPVTVIHDIRDLLNIGRNRKNPREDYLDIYVFGVGPLVNQENINALASKKDKEQHVFKLKDVDNLEDVFFQMLDESRSLGLCGMVWEHKDGTDYHKQPWHAKISITRPSKGHESCMGAVVSEYFVLTAAHCFTVDDEKHSIKVSLGGKKQEWEIDQVLFHPNYDLNAKTAKDIPEFYDYDVALIRLSKKLKYDQTIRPICLPCTEGSNQALRLPLTTTCQQQMQELLPAKDVKALFVSELTKDHRKILTRKEVYIKNGERKAACERDALQAQGYEKVKVVSEVVTPRFLCTGGVIPYADPNTCKGDSGGPLIIHKKSRFIQVGVISWGVVDICKRQQQAPSYARDFHINLYKVLPWLKEKLKDEDLGFL.

A signal peptide spans 1 to 25 (MGSNRCPRLGLVPLILGLLSGGVSM). Sushi domains lie at 35–100 (SPCS…ECKA), 101–160 (IRCP…ICDD), and 163–220 (GYCP…SCQD). Intrachain disulfides connect cysteine 37-cysteine 76, cysteine 62-cysteine 98, cysteine 103-cysteine 145, cysteine 131-cysteine 158, cysteine 165-cysteine 205, and cysteine 191-cysteine 218. Asparagine 122 and asparagine 142 each carry an N-linked (GlcNAc...) asparagine glycan. The VWFA domain maps to 270–469 (NIYLVLDGSD…NLEDVFFQML (200 aa)). Mg(2+)-binding residues include serine 278 and serine 280. N-linked (GlcNAc...) asparagine glycosylation occurs at asparagine 285. Position 353 (threonine 353) interacts with Mg(2+). N-linked (GlcNAc...) asparagine glycosylation is present at asparagine 378. The Peptidase S1 domain maps to 477 to 758 (LCGMVWEHKD…VLPWLKEKLK (282 aa)). 5 disulfides stabilise this stretch: cysteine 478-cysteine 596, cysteine 511-cysteine 527, cysteine 599-cysteine 615, cysteine 660-cysteine 686, and cysteine 699-cysteine 729. Catalysis depends on charge relay system residues histidine 526 and aspartate 576. Catalysis depends on serine 703, which acts as the Charge relay system.

It belongs to the peptidase S1 family. As to quaternary structure, monomer. Interacts with complement C3b; this interaction is dependent on the presence of Mg(2+). In terms of assembly, catalytic component of the C3 convertase of the alternative complement pathway, also named C3bBb, composed of complement factor B Bb and complement C3b. Catalytic component of the C5 convertase of the alternative complement pathway, also named C3bBb3b, composed of complement factor B Bb and additional molecules of complement C3b. Interacts to CFP; this interaction contributes to the stabilization of the active C3-convertase enzyme complex. Mg(2+) serves as cofactor. It depends on Mn(2+) as a cofactor. In terms of processing, cleaved by CFD following activation of the alternative complement system, generating Ba and Bb chains. Cleavage and activation takes place when CFB is already associated with complement C3b.

Its subcellular location is the secreted. The protein localises to the cell surface. The enzyme catalyses Cleavage of Arg-|-Ser bond in complement component C3 alpha-chain to yield C3a and C3b, and Arg-|-Xaa bond in complement component C5 alpha-chain to yield C5a and C5b.. Precursor of the catalytic component of the C3 and C5 convertase complexes of the alternative pathway of the complement system, a cascade of proteins that leads to phagocytosis and breakdown of pathogens and signaling that strengthens the adaptive immune system. The alternative complement pathway acts as an amplification loop that enhances other complement pathways (classical, lectin and GZMK) by promoting formation of additional C3 and C5 convertases. CFB is cleaved and activated by CFD to generate Ba and Bb chains; Bb chain constituting the catalytic component of the C3 and C5 convertases. In terms of biological role, serine protease component of the complement C3 and C5 convertase complexes of the alternative complement pathway. Following cleavage and activation by factor D (CFD), forms the C3 convertase together with complement C3b. As part of the C3 convertase, cleaves and activates C3 into C3a anaphylatoxin and C3b opsonin, the next components of the complement pathways. When an additional complement C3b molecule binds to the C3 convertase, forms the C5 convertase, which cleaves and activates C5 into C5a anaphylatoxin and C5b component of the membrane attack complex. Functionally, involved in proliferation and differentiation of preactivated B-lymphocytes, rapid spreading of peripheral blood monocytes, stimulation of lymphocyte blastogenesis and lysis of erythrocytes. The sequence is that of Complement factor B (CFB) from Sus scrofa (Pig).